The following is a 688-amino-acid chain: Translation initiation factor IF-2 (688 aa).

Residues 50–62 (LLSGKEKSEKTKE) show a composition bias toward basic and acidic residues. Residues 50–95 (LLSGKEKSEKTKEEDDEIETTAKNPIKESINNKKSNKRDDKNEKVN) form a disordered region. Residues 72 to 82 (KNPIKESINNK) are compositionally biased toward low complexity. The segment covering 86 to 95 (KRDDKNEKVN) has biased composition (basic and acidic residues). The 168-residue stretch at 187 to 354 (KRSPIITVMG…MILLSSEILE (168 aa)) folds into the tr-type G domain. The G1 stretch occupies residues 196-203 (GHVDHGKT). Position 196–203 (196–203 (GHVDHGKT)) interacts with GTP. The tract at residues 221 to 225 (GITQH) is G2. The interval 242–245 (DTPG) is G3. Residues 242–246 (DTPGH) and 296–299 (NKID) each bind GTP. Residues 296-299 (NKID) form a G4 region. The G5 stretch occupies residues 332 to 334 (SAH).

Belongs to the TRAFAC class translation factor GTPase superfamily. Classic translation factor GTPase family. IF-2 subfamily.

The protein resides in the cytoplasm. Its function is as follows. One of the essential components for the initiation of protein synthesis. Protects formylmethionyl-tRNA from spontaneous hydrolysis and promotes its binding to the 30S ribosomal subunits. Also involved in the hydrolysis of GTP during the formation of the 70S ribosomal complex. This chain is Translation initiation factor IF-2, found in Clostridium botulinum (strain Langeland / NCTC 10281 / Type F).